The following is a 152-amino-acid chain: Transcriptional regulator MraZ (152 aa).

2 SpoVT-AbrB domains span residues 5-52 (ASAI…PIQE) and 81-124 (AHEC…DEAA).

This sequence belongs to the MraZ family. As to quaternary structure, forms oligomers.

Its subcellular location is the cytoplasm. The protein resides in the nucleoid. In Shewanella halifaxensis (strain HAW-EB4), this protein is Transcriptional regulator MraZ.